The primary structure comprises 435 residues: Serine--tRNA ligase (435 aa).

238–240 (TAE) lines the L-serine pocket. 269 to 271 (RAE) provides a ligand contact to ATP. E292 is a binding site for L-serine. ATP is bound at residue 356–359 (EISS). S392 is a binding site for L-serine.

The protein belongs to the class-II aminoacyl-tRNA synthetase family. Type-1 seryl-tRNA synthetase subfamily. Homodimer. The tRNA molecule binds across the dimer.

It is found in the cytoplasm. It carries out the reaction tRNA(Ser) + L-serine + ATP = L-seryl-tRNA(Ser) + AMP + diphosphate + H(+). The catalysed reaction is tRNA(Sec) + L-serine + ATP = L-seryl-tRNA(Sec) + AMP + diphosphate + H(+). It functions in the pathway aminoacyl-tRNA biosynthesis; selenocysteinyl-tRNA(Sec) biosynthesis; L-seryl-tRNA(Sec) from L-serine and tRNA(Sec): step 1/1. Catalyzes the attachment of serine to tRNA(Ser). Is also able to aminoacylate tRNA(Sec) with serine, to form the misacylated tRNA L-seryl-tRNA(Sec), which will be further converted into selenocysteinyl-tRNA(Sec). This Methylobacterium sp. (strain 4-46) protein is Serine--tRNA ligase.